Reading from the N-terminus, the 276-residue chain is Myoblast determination protein 1 homolog 1 (276 aa).

Residues D84–L135 form the bHLH domain. Positions C228–G253 are disordered.

In terms of assembly, efficient DNA binding requires dimerization with another bHLH protein.

It is found in the nucleus. May act as a transcriptional activator that promotes transcription of muscle-specific target genes and plays a role in muscle differentiation. This is Myoblast determination protein 1 homolog 1 (myod1) from Oncorhynchus mykiss (Rainbow trout).